An 80-amino-acid chain; its full sequence is Serine palmitoyltransferase small subunit A (80 aa).

Over 1-21 (MKVSCEDINGPRSSLSRAWNH) the chain is Cytoplasmic. Residues 22-38 (MSWLYYQYLLVTALYML) traverse the membrane as a helical segment. Over 39 to 43 (EPWER) the chain is Lumenal. Residues 44-66 (TIFNSMLVSIVGMALYTGYIFMP) traverse the membrane as a helical segment. Over 67–80 (QHILAILHYFEIVQ) the chain is Cytoplasmic.

This sequence belongs to the SPTSS family. SPTSSA subfamily. As to quaternary structure, component of the serine palmitoyltransferase (SPT) complex, which is composed of SPTLC1, SPTLC2 or SPTLC3 and SPTSSA or SPTSSB. The heterodimer consisting of SPTLC1 and SPTLC2/SPTLC3 forms the catalytic core of the enzyme, while SPTSSA or SPTSSB subunits determine substrate specificity. SPT also interacts with ORMDL proteins, especially ORMDL3, which negatively regulate SPT activity in the presence of ceramides.

Its subcellular location is the endoplasmic reticulum membrane. Its pathway is lipid metabolism; sphingolipid metabolism. Functionally, component of the serine palmitoyltransferase multisubunit enzyme (SPT) that catalyzes the initial and rate-limiting step in sphingolipid biosynthesis by condensing L-serine and activated acyl-CoA (most commonly palmitoyl-CoA) to form long-chain bases. The SPT complex is composed of SPTLC1, SPTLC2 or SPTLC3 and SPTSSA or SPTSSB. Within this complex, the heterodimer consisting of SPTLC1 and SPTLC2/SPTLC3 forms the catalytic core. Within the SPT complex, SPTSSA stimulates the catalytic activity and plays a role in substrate specificity, which depends upon the overall complex composition. The SPTLC1-SPTLC2-SPTSSA complex shows a strong preference for C16-CoA substrate, while the SPTLC1-SPTLC3-SPTSSA isozyme uses both C14-CoA and C16-CoA as substrates, with a slight preference for C14-CoA. Independently of its action as a SPT component, may be involved in MBOAT7 localization to mitochondria-associated membranes, a membrane bridge between the endoplasmic reticulum and mitochondria, may hence affect MBOAT7-catalyzed incorporation of arachidonic acid into phosphatidylinositol. This chain is Serine palmitoyltransferase small subunit A (sptssa), found in Xenopus tropicalis (Western clawed frog).